We begin with the raw amino-acid sequence, 466 residues long: Peptidyl-prolyl cis-trans isomerase CYP37, chloroplastic (466 aa).

Residues 1–65 constitute a chloroplast transit peptide; sequence MASPLSSSTV…GTKELIHSCN (65 aa). The N-terminal 49 residues, 66-114, are a transit peptide targeting the thylakoid; sequence SSIDSKLNTFEAGSKNLEKLVATILIFVQVWSPLPLFGLDSAYISPAEA. The 189-residue stretch at 278–466 folds into the PPIase cyclophilin-type domain; the sequence is TFSAEAGGDQ…VQNNNINEST (189 aa).

Aerial parts.

The protein localises to the plastid. It is found in the chloroplast thylakoid lumen. It carries out the reaction [protein]-peptidylproline (omega=180) = [protein]-peptidylproline (omega=0). PPIases accelerate the folding of proteins. It catalyzes the cis-trans isomerization of proline imidic peptide bonds in oligopeptides. The protein is Peptidyl-prolyl cis-trans isomerase CYP37, chloroplastic (CYP37) of Arabidopsis thaliana (Mouse-ear cress).